The primary structure comprises 653 residues: Sodium-dependent phosphate transporter 2 (653 aa).

Residues 1–5 are Extracellular-facing; that stretch reads MAIDG. The chain crosses the membrane as a helical span at residues 6–26; the sequence is YLWMVILGFIIAFILAFSVGA. Residues 27–46 are Cytoplasmic-facing; it reads NDVANSFGTAVGSGVVTLRQ. A helical transmembrane segment spans residues 47-67; the sequence is ACILASIFETTGSVLLGAKVG. The Extracellular portion of the chain corresponds to 68–86; it reads ETIRKGIIDVNLYNETVET. The N-linked (GlcNAc...) asparagine glycan is linked to Asn81. Residues 87–107 traverse the membrane as a helical segment; it reads LMAGEVSAMVGSAVWQLIASF. Topologically, residues 108–109 are cytoplasmic; the sequence is LR. The helical transmembrane segment at 110–130 threads the bilayer; sequence LPISGTHCIVGSTIGFSLVAI. The Extracellular portion of the chain corresponds to 131–142; it reads GTQGVQWMELVK. Residues 143 to 163 form a helical membrane-spanning segment; it reads IVASWFISPLLSGFMSGVLFI. Topologically, residues 164-190 are cytoplasmic; sequence LIRIFILKKEDPVPNGLRALPVFYAAT. A helical membrane pass occupies residues 191-211; it reads IAINVFSIMYTGAPVLGLVLP. The Extracellular segment spans residues 212 to 213; it reads IW. Residues 214–234 form a helical membrane-spanning segment; that stretch reads AIALISFGVALLFALFVWLFV. At 235-483 the chain is on the cytoplasmic side; it reads CPWMRRKIAG…EEKEEKDTAE (249 aa). 4 positions are modified to phosphoserine: Ser253, Ser256, Ser259, and Ser268. Residues 275 to 311 are disordered; it reads PGAKANDDSTVPLTGSAGEPSGTSEGTSVGNHPRASY. Polar residues predominate over residues 295-304; sequence SGTSEGTSVG. Residues Ser316 and Ser385 each carry the phosphoserine modification. The tract at residues 459–478 is disordered; sequence SELTDPDQPRDDPAEEEKEE. Residues 484-504 traverse the membrane as a helical segment; it reads VHLLFHFLQVLTACFGSFAHG. The Extracellular portion of the chain corresponds to 505-531; sequence GNDVSNAIGPLVALWLIYEQGAVLQEA. Residues 532–552 form a helical membrane-spanning segment; that stretch reads VTPVWLLFYGGVGICTGLWVW. The Cytoplasmic segment spans residues 553–572; that stretch reads GRRVIQTMGKDLTPITPSSG. A helical transmembrane segment spans residues 573–587; sequence FTIELASAFTVVIAS. Residues 588–594 are Extracellular-facing; sequence NVGLPVS. A helical membrane pass occupies residues 595–610; sequence TTHCKVGSVVAVGWIR. At 611-622 the chain is on the cytoplasmic side; the sequence is SRKAVDWRLFRN. Residues 623 to 643 form a helical membrane-spanning segment; that stretch reads IFVAWFVTVPVAGLFSAAIMA. Over 644–653 the chain is Extracellular; sequence LLMYGILPYV.

The protein belongs to the inorganic phosphate transporter (PiT) (TC 2.A.20) family. As to quaternary structure, homodimer.

It localises to the cell membrane. The protein localises to the apical cell membrane. It catalyses the reaction 2 Na(+)(out) + phosphate(out) = 2 Na(+)(in) + phosphate(in). Functionally, sodium-phosphate symporter which preferentially transports the monovalent form of phosphate with a stoichiometry of two sodium ions per phosphate ion. Plays a critical role in the determination of bone quality and strength by providing phosphate for bone mineralization. Required to maintain normal cerebrospinal fluid phosphate levels. Mediates phosphate-induced calcification of vascular smooth muscle cells (VCMCs) and can functionally compensate for loss of SLC20A1 in VCMCs. Its function is as follows. (Microbial infection) Functions as a retroviral receptor for feline leukemia virus subgroup B (FeLV-B). This is Sodium-dependent phosphate transporter 2 (SLC20A2) from Felis catus (Cat).